The sequence spans 555 residues: Urocanate hydratase (555 aa).

NAD(+) contacts are provided by residues Gly-52–Gly-53, Gln-130, Gly-176–Gly-178, Glu-196, Arg-201, Asn-242–Ala-243, Gln-263–His-267, Tyr-273–Leu-274, and Tyr-322. The active site involves Cys-410. Gly-492 is a binding site for NAD(+).

It belongs to the urocanase family. The cofactor is NAD(+).

The protein resides in the cytoplasm. The catalysed reaction is 4-imidazolone-5-propanoate = trans-urocanate + H2O. It functions in the pathway amino-acid degradation; L-histidine degradation into L-glutamate; N-formimidoyl-L-glutamate from L-histidine: step 2/3. In terms of biological role, catalyzes the conversion of urocanate to 4-imidazolone-5-propionate. The protein is Urocanate hydratase of Shewanella baltica (strain OS195).